A 230-amino-acid polypeptide reads, in one-letter code: Orotidine 5'-phosphate decarboxylase (230 aa).

Residues D10, K31, 58-67 (DLKLHDIPNT), T117, R179, Q188, G208, and R209 contribute to the substrate site. The active-site Proton donor is K60.

It belongs to the OMP decarboxylase family. Type 1 subfamily. As to quaternary structure, homodimer.

The enzyme catalyses orotidine 5'-phosphate + H(+) = UMP + CO2. It participates in pyrimidine metabolism; UMP biosynthesis via de novo pathway; UMP from orotate: step 2/2. Its function is as follows. Catalyzes the decarboxylation of orotidine 5'-monophosphate (OMP) to uridine 5'-monophosphate (UMP). This chain is Orotidine 5'-phosphate decarboxylase, found in Staphylococcus aureus (strain USA300).